A 295-amino-acid chain; its full sequence is ATP synthase subunit a (295 aa).

7 consecutive transmembrane segments (helical) span residues 41–61 (KWSA…WLGF), 101–121 (YLTI…IPVA), 129–149 (IALP…VGIR), 161–181 (LVPA…IEFV), 191–211 (LAIR…VFAL), 222–242 (FVFG…ELMI), and 244–264 (VLQA…AISS).

The protein belongs to the ATPase A chain family. F-type ATPases have 2 components, CF(1) - the catalytic core - and CF(0) - the membrane proton channel. CF(1) has five subunits: alpha(3), beta(3), gamma(1), delta(1), epsilon(1). CF(0) has three main subunits: a(1), b(2) and c(9-12). The alpha and beta chains form an alternating ring which encloses part of the gamma chain. CF(1) is attached to CF(0) by a central stalk formed by the gamma and epsilon chains, while a peripheral stalk is formed by the delta and b chains.

The protein resides in the cell membrane. Functionally, key component of the proton channel; it plays a direct role in the translocation of protons across the membrane. The sequence is that of ATP synthase subunit a from Parafrankia sp. (strain EAN1pec).